Here is a 411-residue protein sequence, read N- to C-terminus: MQSWSSAPVPIVPGRGPELRLYDTADRQVRPVAPGNTATMYVCGITPYDATHLGHAATYLAFDLIHRLWLDLGHEVRYVQNVTDVDDPLFERADRDGVDWRDLAAQEVALFREDMAALRVLSPHDYVGATEAVAEIIELVEKLLASGAAYVLDGEHPDVYYRSDATLQFGYESGYDRDTMLGLFEQRGGDPGRPGKNDALDALLWRAARPGEPSWPSPFGPGRPGWHIECAAIALSRVGSGLDVQGGGSDLIFPHHEFTAAHAECVTGERRFARHYVHAGMIGWDGHKMSKSRGNLVLVSGLRAEGVNPAAVRLGLLAGHYRADRFWSQQVLDEAVGRLQRWRAATTLPAGPDAAAVVARVRQYLADDLNTPKAIAALDGWATDALDYGGHDEVAPRLVASTIDALLGVDL.

Position 43 (C43) interacts with Zn(2+). L-cysteinyl-5'-AMP-binding positions include 43–46, T58, and 81–83; these read CGIT and NVT. Residues 45-55 carry the 'HIGH' region motif; that stretch reads ITPYDATHLGH. Residues 186-191 carry the 'ERGGDP' region motif; it reads QRGGDP. W226 contributes to the L-cysteinyl-5'-AMP binding site. Zn(2+) is bound at residue C230. 248–250 contributes to the L-cysteinyl-5'-AMP binding site; that stretch reads GSD. H255 contacts Zn(2+). L-cysteinyl-5'-AMP is bound at residue I282. Positions 288–292 match the 'KMSKS' region motif; the sequence is KMSKS.

The protein belongs to the class-I aminoacyl-tRNA synthetase family. MshC subfamily. Monomer. Zn(2+) serves as cofactor.

It catalyses the reaction 1D-myo-inositol 2-amino-2-deoxy-alpha-D-glucopyranoside + L-cysteine + ATP = 1D-myo-inositol 2-(L-cysteinylamino)-2-deoxy-alpha-D-glucopyranoside + AMP + diphosphate + H(+). In terms of biological role, catalyzes the ATP-dependent condensation of GlcN-Ins and L-cysteine to form L-Cys-GlcN-Ins. This is L-cysteine:1D-myo-inositol 2-amino-2-deoxy-alpha-D-glucopyranoside ligase from Mycobacterium marinum (strain ATCC BAA-535 / M).